The primary structure comprises 295 residues: Nucleotide-binding protein YjiE (295 aa).

12 to 19 (GMSGAGKT) contributes to the ATP binding site. 63-66 (DMRS) serves as a coordination point for GTP.

It belongs to the RapZ-like family.

In terms of biological role, displays ATPase and GTPase activities. The chain is Nucleotide-binding protein YjiE (yjiE) from Lactococcus lactis subsp. lactis (strain IL1403) (Streptococcus lactis).